The sequence spans 237 residues: NADH-ubiquinone oxidoreductase assembly factor N7BML (237 aa).

Positions 214-223 are enriched in basic and acidic residues; sequence VEKERDDSGK. The segment at 214–237 is disordered; sequence VEKERDDSGKPAEWTPKAAVRRRG.

The protein belongs to the complex I NDUFA12 subunit family.

The protein resides in the mitochondrion. Its function is as follows. Acts as an assembly factor of mitochondrial complex I. In Yarrowia lipolytica (strain CLIB 122 / E 150) (Yeast), this protein is NADH-ubiquinone oxidoreductase assembly factor N7BML.